Here is a 226-residue protein sequence, read N- to C-terminus: 2,3-bisphosphoglycerate-dependent phosphoglycerate mutase (226 aa).

Residues 8–15 (RHGQSVWN), 21–22 (TG), Arg-58, 109–112 (ERMY), Lys-120, 136–137 (RR), and 180–181 (GN) each bind substrate. His-9 (tele-phosphohistidine intermediate) is an active-site residue. The Proton donor/acceptor role is filled by Glu-109.

This sequence belongs to the phosphoglycerate mutase family. BPG-dependent PGAM subfamily.

The enzyme catalyses (2R)-2-phosphoglycerate = (2R)-3-phosphoglycerate. It participates in carbohydrate degradation; glycolysis; pyruvate from D-glyceraldehyde 3-phosphate: step 3/5. Its function is as follows. Catalyzes the interconversion of 2-phosphoglycerate and 3-phosphoglycerate. The polypeptide is 2,3-bisphosphoglycerate-dependent phosphoglycerate mutase (Chlamydia muridarum (strain MoPn / Nigg)).